Reading from the N-terminus, the 875-residue chain is uncharacterized protein (875 aa).

This is an uncharacterized protein from Mycobacterium bovis (strain ATCC BAA-935 / AF2122/97).